The primary structure comprises 142 residues: Large ribosomal subunit protein uL11 (142 aa).

Positions 86-105 are disordered; sequence LKSGSKEPGKQSAGQISRAK.

It belongs to the universal ribosomal protein uL11 family. In terms of assembly, part of the ribosomal stalk of the 50S ribosomal subunit. Interacts with L10 and the large rRNA to form the base of the stalk. L10 forms an elongated spine to which L12 dimers bind in a sequential fashion forming a multimeric L10(L12)X complex. One or more lysine residues are methylated.

In terms of biological role, forms part of the ribosomal stalk which helps the ribosome interact with GTP-bound translation factors. The polypeptide is Large ribosomal subunit protein uL11 (Chelativorans sp. (strain BNC1)).